A 50-amino-acid chain; its full sequence is U37-theraphotoxin-Cg1b (50 aa).

The N-terminal stretch at 1–19 (MRVLLIIAGLALLSVVCYT) is a signal peptide.

This sequence belongs to the neurotoxin 10 (Hwtx-1) family. 67 (Jztx-67) subfamily. Expressed by the venom gland.

It localises to the secreted. This is U37-theraphotoxin-Cg1b from Chilobrachys guangxiensis (Chinese earth tiger tarantula).